The primary structure comprises 84 residues: Large ribosomal subunit protein bL27 (84 aa).

The interval 1–21 (MAHKKAGGSTRNGRDSESKRL) is disordered.

It belongs to the bacterial ribosomal protein bL27 family.

The protein is Large ribosomal subunit protein bL27 of Baumannia cicadellinicola subsp. Homalodisca coagulata.